We begin with the raw amino-acid sequence, 328 residues long: NNLPSHSEVIQLYKSRNIGRLRLYDPNHGALNALRGSNIEVILGLPNVDVKHIASGMEHARWWVQKNVKDFWPDVKIKYIAVGNEISPVTGTSSLTSFQVPALVNIYKAIGEAGLGNDIKVSTSVDMTLIGNSYPPSQGSFRNDVRWFTDPIVGFLRDTRAPLLVNIYPYFSYSGNPGQISLPYALFTAPNVVVQDGSRQYRNLFDAMLDSVYAAMERTGGGSVGIVVSESGWPSAGAFGATQDNAATYLRNLIQHAKEGSPRKPGPIETYIFAMFDENNKNPELEKHFGLFSPNKQPKYNLNFGVSERVWDISAETNSTTSSLISEM.

Residue E85 is the Proton donor of the active site. E230 serves as the catalytic Nucleophile. The propeptide at 306-328 (VSERVWDISAETNSTTSSLISEM) is removed in mature form. The N-linked (GlcNAc...) asparagine glycan is linked to N318.

This sequence belongs to the glycosyl hydrolase 17 family.

It localises to the vacuole. It carries out the reaction Hydrolysis of (1-&gt;3)-beta-D-glucosidic linkages in (1-&gt;3)-beta-D-glucans.. In terms of biological role, is thought to be an important plant defense-related product against fungal pathogens. The protein is Glucan endo-1,3-beta-glucosidase, basic isoform 3 (GLUB3) of Solanum tuberosum (Potato).